The following is a 523-amino-acid chain: Beta-glucosidase 31 (523 aa).

Positions 1–22 (MTPARVVFICCVVLLAAAAAAA) are cleaved as a signal peptide. Residues glutamine 49, histidine 149, and 194 to 195 (NE) contribute to the a beta-D-glucoside site. The active-site Proton donor is glutamate 195. An intrachain disulfide couples cysteine 214 to cysteine 223. Residue asparagine 227 is glycosylated (N-linked (GlcNAc...) asparagine). A beta-D-glucoside contacts are provided by tyrosine 339 and glutamate 413. The active-site Nucleophile is the glutamate 413. The N-linked (GlcNAc...) asparagine glycan is linked to asparagine 450. A beta-D-glucoside is bound by residues tryptophan 460, 467–468 (EY), and phenylalanine 476.

This sequence belongs to the glycosyl hydrolase 1 family.

It catalyses the reaction Hydrolysis of terminal, non-reducing beta-D-glucosyl residues with release of beta-D-glucose.. The protein is Beta-glucosidase 31 (BGLU31) of Oryza sativa subsp. japonica (Rice).